The primary structure comprises 302 residues: Aspartate carbamoyltransferase catalytic subunit (302 aa).

Positions 49 and 50 each coordinate carbamoyl phosphate. Position 77 (K77) interacts with L-aspartate. The carbamoyl phosphate site is built by R99, H126, and Q129. 2 residues coordinate L-aspartate: R159 and R209. Residues A250 and P251 each contribute to the carbamoyl phosphate site.

This sequence belongs to the aspartate/ornithine carbamoyltransferase superfamily. ATCase family. As to quaternary structure, heterododecamer (2C3:3R2) of six catalytic PyrB chains organized as two trimers (C3), and six regulatory PyrI chains organized as three dimers (R2).

It carries out the reaction carbamoyl phosphate + L-aspartate = N-carbamoyl-L-aspartate + phosphate + H(+). Its pathway is pyrimidine metabolism; UMP biosynthesis via de novo pathway; (S)-dihydroorotate from bicarbonate: step 2/3. Functionally, catalyzes the condensation of carbamoyl phosphate and aspartate to form carbamoyl aspartate and inorganic phosphate, the committed step in the de novo pyrimidine nucleotide biosynthesis pathway. This is Aspartate carbamoyltransferase catalytic subunit from Staphylococcus carnosus (strain TM300).